A 121-amino-acid polypeptide reads, in one-letter code: Ribonuclease P protein component (121 aa).

It belongs to the RnpA family. As to quaternary structure, consists of a catalytic RNA component (M1 or rnpB) and a protein subunit.

It carries out the reaction Endonucleolytic cleavage of RNA, removing 5'-extranucleotides from tRNA precursor.. Functionally, RNaseP catalyzes the removal of the 5'-leader sequence from pre-tRNA to produce the mature 5'-terminus. It can also cleave other RNA substrates such as 4.5S RNA. The protein component plays an auxiliary but essential role in vivo by binding to the 5'-leader sequence and broadening the substrate specificity of the ribozyme. The chain is Ribonuclease P protein component from Lactobacillus delbrueckii subsp. bulgaricus (strain ATCC 11842 / DSM 20081 / BCRC 10696 / JCM 1002 / NBRC 13953 / NCIMB 11778 / NCTC 12712 / WDCM 00102 / Lb 14).